Here is a 205-residue protein sequence, read N- to C-terminus: Probable thymidylate kinase (205 aa).

7 to 14 (GIDGAGKS) provides a ligand contact to ATP.

Belongs to the thymidylate kinase family.

It catalyses the reaction dTMP + ATP = dTDP + ADP. The protein is Probable thymidylate kinase of Thermococcus kodakarensis (strain ATCC BAA-918 / JCM 12380 / KOD1) (Pyrococcus kodakaraensis (strain KOD1)).